Here is a 410-residue protein sequence, read N- to C-terminus: Lipid droplet-regulating VLDL assembly factor AUP1 (410 aa).

An N-acetylmethionine modification is found at Met1. Residues 1–20 (MEPPPAPGPERLFDSHRLPS) are Cytoplasmic-facing. An intramembrane segment occupies 21–41 (DGFLLLALLLYAPVGLCLLVL). The Cytoplasmic segment spans residues 42-410 (RLFLGLHVFL…FRERQAQEAE (369 aa)). Residues 259–293 (LTPADKAEHMKRQRHPRLRPQSVQSSFPSPPSPSS) are disordered. Ser292 is modified (phosphoserine). In terms of domain architecture, CUE spans 296–338 (QLTILAQRVKEVLPHVPLNVIQRDLARTGCVDLTITNLLEGAV). Residues 348 to 367 (GSQSLPTASAPKFPSSGLVT) are disordered. Phosphoserine is present on Ser363. Thr367 bears the Phosphothreonine mark.

Belongs to the AUP1 family. As to quaternary structure, identified in a complex that contains SEL1L, OS9, FAF2/UBXD8, UBE2J1/UBC6E and AUP1. Interacts with the cytoplasmic tail of ITGA2B, ITGA1, ITGA2, ITGA5, ITGAV and ITGAM. Interacts (via C-terminus) with UBE2G2; the interaction recruits UBE2G2 to lipid droplets. Interacts with ubiquitin ligases AMFR/gp78 and RNF139/TRC8; this promotes interaction of UBE2G2 with AMFR and RNF139. Interacts with apolipoprotein APOB. Post-translationally, monoubiquitinated and diubiquitinated.

It is found in the endoplasmic reticulum membrane. Its subcellular location is the lipid droplet. Its function is as follows. Plays a role in the translocation of terminally misfolded proteins from the endoplasmic reticulum lumen to the cytoplasm and their degradation by the proteasome. Plays a role in lipid droplet formation. Induces lipid droplet clustering. Recruits ubiquitin-conjugating enzyme UBE2G2 to lipid droplets which facilitates its interaction with ubiquitin ligases AMFR/gp78 and RNF139/TRC8, leading to sterol-induced ubiquitination of HMGCR and its subsequent proteasomal degradation. Also required for the degradation of INSIG1, SREBF1 and SREBF2. Plays a role in regulating assembly and secretion of very low density lipoprotein particles and stability of apolipoprotein APOB. The protein is Lipid droplet-regulating VLDL assembly factor AUP1 of Rattus norvegicus (Rat).